A 736-amino-acid chain; its full sequence is uncharacterized protein (736 aa).

ABC transporter domains follow at residues 183 to 459 (IKID…KQME) and 518 to 734 (LQMS…TMTI). ATP contacts are provided by residues 215-222 (GRNGIGKS) and 551-558 (GPNGAGKS).

This sequence belongs to the ABC transporter superfamily.

The protein resides in the cytoplasm. This is an uncharacterized protein from Schizosaccharomyces pombe (strain 972 / ATCC 24843) (Fission yeast).